The primary structure comprises 104 residues: Naphthalene 1,2-dioxygenase system, ferredoxin component (104 aa).

Positions 6–101 constitute a Rieske domain; that stretch reads IDAVALYEIP…VKIEGQRVMI (96 aa). Residues cysteine 45, histidine 47, cysteine 64, and histidine 67 each coordinate [2Fe-2S] cluster.

This sequence belongs to the bacterial ring-hydroxylating dioxygenase ferredoxin component family. The naphthalene dioxygenase (NDO) multicomponent enzyme system is composed of an electron transfer component and a dioxygenase component (iron sulfur protein (ISP)). The electron transfer component is composed of a ferredoxin reductase (NdoR) and a ferredoxin (NdoA), and the dioxygenase component is formed of a heterohexamer (trimer of heterodimers) of three large alpha subunits (NdoB) and three small beta subunits (NdoC). It depends on [2Fe-2S] cluster as a cofactor.

The protein operates within aromatic compound metabolism; naphthalene degradation. Component of the naphthalene dioxygenase (NDO) multicomponent enzyme system which catalyzes the incorporation of both atoms of molecular oxygen into naphthalene to form cis-(1R,2S)-dihydroxy-1,2-dihydronaphthalene. Functions as an intermediate electron transfer protein via a specific interaction with iron sulfur protein components (ISP) (NdoB and NdoC). The sequence is that of Naphthalene 1,2-dioxygenase system, ferredoxin component from Pseudomonas aeruginosa.